The chain runs to 667 residues: tRNA 5-methylaminomethyl-2-thiouridine biosynthesis bifunctional protein MnmC (667 aa).

A compositionally biased stretch (polar residues) spans M1–I12. The tract at residues M1 to H20 is disordered. The tract at residues M1 to E240 is tRNA (mnm(5)s(2)U34)-methyltransferase. Residues I268–L667 are FAD-dependent cmnm(5)s(2)U34 oxidoreductase.

In the N-terminal section; belongs to the methyltransferase superfamily. tRNA (mnm(5)s(2)U34)-methyltransferase family. It in the C-terminal section; belongs to the DAO family. FAD is required as a cofactor.

The protein localises to the cytoplasm. The enzyme catalyses 5-aminomethyl-2-thiouridine(34) in tRNA + S-adenosyl-L-methionine = 5-methylaminomethyl-2-thiouridine(34) in tRNA + S-adenosyl-L-homocysteine + H(+). In terms of biological role, catalyzes the last two steps in the biosynthesis of 5-methylaminomethyl-2-thiouridine (mnm(5)s(2)U) at the wobble position (U34) in tRNA. Catalyzes the FAD-dependent demodification of cmnm(5)s(2)U34 to nm(5)s(2)U34, followed by the transfer of a methyl group from S-adenosyl-L-methionine to nm(5)s(2)U34, to form mnm(5)s(2)U34. This is tRNA 5-methylaminomethyl-2-thiouridine biosynthesis bifunctional protein MnmC from Magnetococcus marinus (strain ATCC BAA-1437 / JCM 17883 / MC-1).